Here is a 192-residue protein sequence, read N- to C-terminus: MINISKKAQEHFTSLLSNEPENTQIRVFIVNPGTPNAECGVAFCPENEIELSDIQLKYDGFFVYVNKDTISYLKNSVIDLVTDKIGSQLTLKAPYAKNNFSKKVSSSLEEKVKCFLNLEINPQLSMHGGRVELIKIDKNGIAAIQFSGGCNGCSMIGSTLKETVEKKLLSSFSEIKKVYDETHHLHGQHSFY.

The [4Fe-4S] cluster site is built by Cys150 and Cys153.

The protein belongs to the NfuA family. Homodimer. [4Fe-4S] cluster is required as a cofactor.

Involved in iron-sulfur cluster biogenesis. Binds a 4Fe-4S cluster, can transfer this cluster to apoproteins, and thereby intervenes in the maturation of Fe/S proteins. Could also act as a scaffold/chaperone for damaged Fe/S proteins. The chain is Fe/S biogenesis protein NfuA from Buchnera aphidicola subsp. Acyrthosiphon pisum (strain APS) (Acyrthosiphon pisum symbiotic bacterium).